A 314-amino-acid polypeptide reads, in one-letter code: MNILLANPRGFCAGVDRAISIVELALEIHGAPIYVRHEVVHNRFVVDGLKAKGAVFVEELDEVPDGAIVIFSAHGVSQEVRQEAKRRGLKVFDATCPLVTKVHMQVARASKKGTKAILIGHEGHPEVIGTMGQYDNQDAGIFLVESVEDIAKLPVSSQDDLTFMTQTTLSIDDTSDVIEALKEKYPAIQGPRKNDICYATTNRQQAVRELAKQSQLVLVVGSKNSSNSNRLAELASRMGVPSKLIDGPQDIDPSWLDGVETIGITAGASAPEVLVQSVVEHLKTLGVTGVSNLEGCEENMVFEVPKELRIHEVK.

Cys-12 is a binding site for [4Fe-4S] cluster. (2E)-4-hydroxy-3-methylbut-2-enyl diphosphate is bound by residues His-41 and His-74. Residues His-41 and His-74 each coordinate dimethylallyl diphosphate. Residues His-41 and His-74 each contribute to the isopentenyl diphosphate site. Cys-96 serves as a coordination point for [4Fe-4S] cluster. His-124 contributes to the (2E)-4-hydroxy-3-methylbut-2-enyl diphosphate binding site. Residue His-124 participates in dimethylallyl diphosphate binding. Position 124 (His-124) interacts with isopentenyl diphosphate. The Proton donor role is filled by Glu-126. Residue Thr-167 coordinates (2E)-4-hydroxy-3-methylbut-2-enyl diphosphate. [4Fe-4S] cluster is bound at residue Cys-197. Residues Ser-225, Ser-226, Asn-227, and Ser-269 each contribute to the (2E)-4-hydroxy-3-methylbut-2-enyl diphosphate site. Dimethylallyl diphosphate contacts are provided by Ser-225, Ser-226, Asn-227, and Ser-269. 4 residues coordinate isopentenyl diphosphate: Ser-225, Ser-226, Asn-227, and Ser-269.

The protein belongs to the IspH family. It depends on [4Fe-4S] cluster as a cofactor.

The catalysed reaction is isopentenyl diphosphate + 2 oxidized [2Fe-2S]-[ferredoxin] + H2O = (2E)-4-hydroxy-3-methylbut-2-enyl diphosphate + 2 reduced [2Fe-2S]-[ferredoxin] + 2 H(+). It catalyses the reaction dimethylallyl diphosphate + 2 oxidized [2Fe-2S]-[ferredoxin] + H2O = (2E)-4-hydroxy-3-methylbut-2-enyl diphosphate + 2 reduced [2Fe-2S]-[ferredoxin] + 2 H(+). Its pathway is isoprenoid biosynthesis; dimethylallyl diphosphate biosynthesis; dimethylallyl diphosphate from (2E)-4-hydroxy-3-methylbutenyl diphosphate: step 1/1. The protein operates within isoprenoid biosynthesis; isopentenyl diphosphate biosynthesis via DXP pathway; isopentenyl diphosphate from 1-deoxy-D-xylulose 5-phosphate: step 6/6. Its function is as follows. Catalyzes the conversion of 1-hydroxy-2-methyl-2-(E)-butenyl 4-diphosphate (HMBPP) into a mixture of isopentenyl diphosphate (IPP) and dimethylallyl diphosphate (DMAPP). Acts in the terminal step of the DOXP/MEP pathway for isoprenoid precursor biosynthesis. This Actinobacillus pleuropneumoniae serotype 5b (strain L20) protein is 4-hydroxy-3-methylbut-2-enyl diphosphate reductase.